A 254-amino-acid chain; its full sequence is Ribosomal RNA small subunit methyltransferase J (254 aa).

Residues 107-108, 123-124, and D174 each bind S-adenosyl-L-methionine; these read RD and ER.

Belongs to the methyltransferase superfamily. RsmJ family.

It localises to the cytoplasm. It carries out the reaction guanosine(1516) in 16S rRNA + S-adenosyl-L-methionine = N(2)-methylguanosine(1516) in 16S rRNA + S-adenosyl-L-homocysteine + H(+). Specifically methylates the guanosine in position 1516 of 16S rRNA. This chain is Ribosomal RNA small subunit methyltransferase J, found in Coxiella burnetii (strain CbuK_Q154) (Coxiella burnetii (strain Q154)).